Here is a 210-residue protein sequence, read N- to C-terminus: Protein HEADING DATE REPRESSOR 1 (210 aa).

Positions 1–97 are disordered; it reads MEEPASADPP…GKRSSAEMLL (97 aa). The stretch at 29 to 49 forms a coiled coil; sequence QQELNKEAADEQLNNQAHEEA. Composition is skewed to basic and acidic residues over residues 45–54 and 62–79; these read AHEEAMKIDD and DDVHPDPKANLSEKRKAL. Residues 129–184 adopt a coiled-coil conformation; it reads RRIAIQEMNRKDREINGLNEQLEEDSRVLELLQKQLADERKKRTEIEKENSMLHEQ.

In terms of assembly, interacts with OSK3 and OSK4. In terms of tissue distribution, mostly expressed in leaves, seedlings and floral organs, and, to a lower extent, in panicle, roots, nodes, internodes, leaf joint and sheath.

The protein localises to the nucleus. In terms of biological role, regulates flowering time via a photoperiod-dependent pathway. Suppressor of flowering that upregulates HD1 and down-regulates EHD1 in long days (LD), thus leading to the down-regulation of HD3A and RFT1. Triggers OSK4-mediated HD1 phosphorylation. This is Protein HEADING DATE REPRESSOR 1 from Oryza sativa subsp. japonica (Rice).